The sequence spans 317 residues: MNTANNTLPTAADWAGEDGAPDAADTRKIERESHKLEKRLCREVGRAITDFNMIEEGDKIMVCMSGGKDSYTLLDILRKLQKRAPVKFDIVAVNLDQKQPGFPEHVLPDYFKSIGVQYHIENQDTYSVVKRVVPEGKTTCSLCSRLRRAILYKVADDLGCTKLALGHHRDDIVATLMLNMFYGGRMKGMPPKLVSDDGKHVVIRPLCYVPEKDTARWAQYQQFPIIPCNLCGSQDGLQRVAVNEMLREWDKKFPGRIESMLRAMGHVVTTHLMDPHLHDFKNAKATGIADPNGDMAFDHEEFPVAPALPGLQVVQLG.

The disordered stretch occupies residues 1-29 (MNTANNTLPTAADWAGEDGAPDAADTRKI). Residues 65–70 (SGGKDS) carry the PP-loop motif motif. Residues C140, C143, and C231 each contribute to the [4Fe-4S] cluster site.

The protein belongs to the TtcA family. As to quaternary structure, homodimer. The cofactor is Mg(2+). Requires [4Fe-4S] cluster as cofactor.

It is found in the cytoplasm. It catalyses the reaction cytidine(32) in tRNA + S-sulfanyl-L-cysteinyl-[cysteine desulfurase] + AH2 + ATP = 2-thiocytidine(32) in tRNA + L-cysteinyl-[cysteine desulfurase] + A + AMP + diphosphate + H(+). Its pathway is tRNA modification. Its function is as follows. Catalyzes the ATP-dependent 2-thiolation of cytidine in position 32 of tRNA, to form 2-thiocytidine (s(2)C32). The sulfur atoms are provided by the cysteine/cysteine desulfurase (IscS) system. In Acidovorax ebreus (strain TPSY) (Diaphorobacter sp. (strain TPSY)), this protein is tRNA-cytidine(32) 2-sulfurtransferase.